We begin with the raw amino-acid sequence, 530 residues long: Glutamate--cysteine ligase (530 aa).

This sequence belongs to the glutamate--cysteine ligase type 1 family. Type 1 subfamily.

The catalysed reaction is L-cysteine + L-glutamate + ATP = gamma-L-glutamyl-L-cysteine + ADP + phosphate + H(+). It participates in sulfur metabolism; glutathione biosynthesis; glutathione from L-cysteine and L-glutamate: step 1/2. This chain is Glutamate--cysteine ligase, found in Saccharophagus degradans (strain 2-40 / ATCC 43961 / DSM 17024).